Reading from the N-terminus, the 1348-residue chain is Adhesion G protein-coupled receptor F5 (1348 aa).

Residues 1-21 form the signal peptide; it reads MRSPRTFTFYFLLLVICSSEA. Over 22–1019 the chain is Extracellular; it reads ALSTPTEPIV…LKILLDIISY (998 aa). The SEA domain maps to 163–271; sequence PEAFITLKLK…NSFQGTPSNE (109 aa). Ig-like domains are found at residues 268–366, 367–464, and 469–559; these read PSNE…LDVT, PIRI…IAVT, and ANLT…KDVT. N-linked (GlcNAc...) asparagine glycans are attached at residues asparagine 270, asparagine 286, asparagine 337, and asparagine 349. The cysteines at positions 291 and 348 are disulfide-linked. Cysteine 389 and cysteine 447 are disulfide-bonded. N-linked (GlcNAc...) asparagine glycans are attached at residues asparagine 470, asparagine 538, and asparagine 665. Cysteines 490 and 543 form a disulfide. Serine 818 is modified (phosphoserine). The GAIN-B domain occupies 841-1005; it reads TPPFLAHPNV…SILMSPDSPD (165 aa). Intrachain disulfides connect cysteine 953/cysteine 987 and cysteine 972/cysteine 989. Residues 953–1005 are GPS; the sequence is CVFWNFSLANNTGGWDSSGCSVEDDGRDNRDRVFCKCNHLTSFSILMSPDSPD. The tethered agonist stretch occupies residues 993-1008; sequence TSFSILMSPDSPDPGS. A helical transmembrane segment spans residues 1020 to 1040; the sequence is IGLGFSIVSLAACLVVEAMVW. Over 1041 to 1055 the chain is Cytoplasmic; the sequence is KSVTKNRTSYMRHIC. A helical membrane pass occupies residues 1056–1076; it reads IVNIAFCLLIADIWFIVAGAI. The Extracellular portion of the chain corresponds to 1077–1092; sequence HDGRYPLNETACVAAT. Residues 1093–1113 traverse the membrane as a helical segment; it reads FFIHFFYLSVFFWMLTLGLML. At 1114-1130 the chain is on the cytoplasmic side; the sequence is FYRLIFILHDASKSTQK. The chain crosses the membrane as a helical span at residues 1131 to 1151; that stretch reads AIAFSLGYGCPLIISSITVGV. Residues 1152–1175 are Extracellular-facing; the sequence is TQPQEVYMRKNACWLNWEDTRALL. The helical transmembrane segment at 1176–1196 threads the bilayer; sequence AFAIPALIIVVVNVSITVVVI. Topologically, residues 1197-1221 are cytoplasmic; it reads TKILRPSIGDKPGKQEKSSLFQISK. The helical transmembrane segment at 1222–1242 threads the bilayer; sequence SIGVLTPLLGLTWGFGLATVI. Residues 1243-1250 are Extracellular-facing; it reads QGSNAVFH. The helical transmembrane segment at 1251–1271 threads the bilayer; that stretch reads IIFTLLNAFQGLFILLFGCLW. The Cytoplasmic segment spans residues 1272 to 1348; that stretch reads DQKVQEALLH…NSSSAYSLLN (77 aa). Position 1302 is a phosphothreonine (threonine 1302). Serine 1309 is modified (phosphoserine). Residues 1328-1348 form a disordered region; sequence STPETTSSSLENSSSAYSLLN.

Belongs to the G-protein coupled receptor 2 family. Adhesion G-protein coupled receptor (ADGR) subfamily. Homodimer; disulfide-linked. Heterodimer of 2 chains generated by proteolytic processing; the large extracellular N-terminal fragment and the membrane-bound C-terminal fragment predominantly remain associated and non-covalently linked. Fragment generates by the processing enzyme furin remains attached to the extracellular N-terminal fragment. Interacts (via N-terminal extracellular domain) with SFTPD. Post-translationally, highly glycosylated. In terms of processing, proteolytically cleaved at multiple sites: one in the GPS region of the GAIN-B domain (S1 site) and the other in the SEA domain (S2 site). The proteolytic cleavage at S1 site generates an extracellular subunit and a seven-transmembrane subunit. The proteolytic cleavage at S2 site generates a fragment that undergoes proteolytic cleavage by the processing enzyme furin. As to expression, widely expressed, with highest levels in lung, pancreas, kidney and heart. In the kidney, expressed more abundantly in the medulla than in the cortex, predominantly expressed in A-intercalated cells (at protein level). Expressed in endothelial cells from various tissues, including brain, heart, kidney, liver, lung and muscle. In the lung, expressed in alveolar type II (ATII) cells (at protein level). Expressed in pancreatic islets of Langerhans, predominantly in delta cells, as well as in endothelial cells. Expressed in white adipose tissue.

The protein resides in the cell membrane. As an adhesion G protein-coupled receptor (aGPCR) exhibits a large N-terminal extracellular domain containing highly conserved GPCR autoproteolysis-inducing (GAIN) domain. During synthesis, intracellular autoproteolytic processing of nascent chain within the GAIN domain generates a mature protein, consisting of an N-terminal fragment that is non-covalently linked to the C-terminal fragment. The mature protein is routed to the plasma membrane where the N- and C-terminal fragments remain associated, forming the holoreceptor. Dissociation of the aGPCR fragments stimulates G protein signaling through the action of the tethered-peptide agonist stalk that is occluded within the GAIN domain in the holoreceptor form. This dissociation might be induced by ligand binding, such as that of sFNDC4. Its function is as follows. Adhesion G protein-coupled receptor. In alveolar type II (ATII or AT2) cells, required for normal lung surfactant homeostasis. Modulation of both surfactant secretion and uptake by ATII cells is mediated by the downstream activation of GNAQ/GNA11 proteins and may be a consequence of increased cortical F-actin assembly induced by ADGRF5 activation. In the kidney, may play a role in the regulation of acid excretion into the primary urine, possibly by regulating the surface expression of V-ATPase proton pump. As a receptor for soluble FNDC4 (sFNDC4), required for proper systemic glucose tolerance, specifically sensitizing white adipose tissue to insulin. Also plays a role in sFNDC4-induced decrease of local inflammation in white adipose tissue. In Mus musculus (Mouse), this protein is Adhesion G protein-coupled receptor F5 (Adgrf5).